Consider the following 417-residue polypeptide: MTRGVPRLAVAARHFSTAEAAGVKVAAQDGQSPISDLSVVLRGGSRYATVPGVSHILEKFAFQNTVPKSALRFVRELELFGGKLYTHTTREHIVLRTQFLKQDLPYFVDAFANVLKETKFQQFELTERVAPVAELDLLKRESDPAFTALEAAHEVAFRTGLGNSVYAQGYSPVTLEDVKEFARQVYAKQNVAVVGNNVVPADLQQLVGTAFADLQEGSKVTQAGTTTLHGGEARVRTSTGNALTIALPIAEPKPVYHALASFLGGPASMPWSVGASPLAQATVGTHTSVKATYHNYGDAGLFAITIKGDSPAEISQVAHKAVQALKDTGAEVTEEQAARAYAKSKFAAAEAFENPDSSASVIGMELLSGVSRIAPENVQKFTPAELSEAAAQLSASAKPVVAAVGQVHALPFADELF.

The N-terminal 22 residues, 1–22 (MTRGVPRLAVAARHFSTAEAAG), are a transit peptide targeting the mitochondrion.

It belongs to the peptidase M16 family. UQCRC2/QCR2 subfamily. In terms of assembly, component of the ubiquinol-cytochrome c oxidoreductase (cytochrome b-c1 complex, complex III, CIII), a multisubunit enzyme composed of 3 respiratory subunits cytochrome b, cytochrome c1 and Rieske protein, 2 core protein subunits, and additional low-molecular weight protein subunits. The complex exists as an obligatory dimer and forms supercomplexes (SCs) in the inner mitochondrial membrane with cytochrome c oxidase (complex IV, CIV).

The protein resides in the mitochondrion inner membrane. In terms of biological role, component of the ubiquinol-cytochrome c oxidoreductase, a multisubunit transmembrane complex that is part of the mitochondrial electron transport chain which drives oxidative phosphorylation. The respiratory chain contains 3 multisubunit complexes succinate dehydrogenase (complex II, CII), ubiquinol-cytochrome c oxidoreductase (cytochrome b-c1 complex, complex III, CIII) and cytochrome c oxidase (complex IV, CIV), that cooperate to transfer electrons derived from NADH and succinate to molecular oxygen, creating an electrochemical gradient over the inner membrane that drives transmembrane transport and the ATP synthase. The cytochrome b-c1 complex catalyzes electron transfer from ubiquinol to cytochrome c, linking this redox reaction to translocation of protons across the mitochondrial inner membrane, with protons being carried across the membrane as hydrogens on the quinol. In the process called Q cycle, 2 protons are consumed from the matrix, 4 protons are released into the intermembrane space and 2 electrons are passed to cytochrome c. This Yarrowia lipolytica (strain CLIB 122 / E 150) (Yeast) protein is Cytochrome b-c1 complex subunit 2, mitochondrial (QCR2).